The primary structure comprises 121 residues: Small ribosomal subunit protein uS13 (121 aa).

The disordered stretch occupies residues 96–121 (PVRGQNTKNNARTRKGKAVAIAGKKK). Over residues 106–121 (ARTRKGKAVAIAGKKK) the composition is skewed to basic residues.

Belongs to the universal ribosomal protein uS13 family. Part of the 30S ribosomal subunit. Forms a loose heterodimer with protein S19. Forms two bridges to the 50S subunit in the 70S ribosome.

Its function is as follows. Located at the top of the head of the 30S subunit, it contacts several helices of the 16S rRNA. In the 70S ribosome it contacts the 23S rRNA (bridge B1a) and protein L5 of the 50S subunit (bridge B1b), connecting the 2 subunits; these bridges are implicated in subunit movement. Contacts the tRNAs in the A and P-sites. This chain is Small ribosomal subunit protein uS13, found in Streptococcus gordonii (strain Challis / ATCC 35105 / BCRC 15272 / CH1 / DL1 / V288).